Consider the following 237-residue polypeptide: CDP-diacylglycerol--inositol 3-phosphatidyltransferase (237 aa).

Residues 1 to 12 (MGKNEQKDPNVY) are Cytoplasmic-facing. The chain crosses the membrane as a helical span at residues 13–33 (FFVPNLIGFTRVFLVLISLYF). The Lumenal portion of the chain corresponds to 34–41 (MSWHPNYC). The chain crosses the membrane as a helical span at residues 42–62 (TIVYLYSSLLDAFDGWAARKL). Mg(2+)-binding residues include Asp-52 and Asp-55. The a CDP-1,2-diacyl-sn-glycerol site is built by Gly-56, Arg-60, and Thr-66. Residues 63–71 (HQATNFGAI) lie on the Cytoplasmic side of the membrane. A helical transmembrane segment spans residues 72–92 (LDMVTDRCATSCLLCFLCAAY). Mg(2+)-binding residues include Asp-73 and Asp-77. Catalysis depends on Asp-77, which acts as the Proton acceptor. Over 93 to 94 (PK) the chain is Lumenal. A helical transmembrane segment spans residues 95 to 115 (YAIIFQLLVSLDLASHYMHMY). At 116–144 (STLHQGASSHKTVTKKHNWMLRLYYGNNK) the chain is on the cytoplasmic side. A helical transmembrane segment spans residues 145 to 165 (VLFIFCAANEMFFVALYLLSF). Over 166 to 185 (TPRTPPKLGYLPVPSFIYST) the chain is Lumenal. The helical transmembrane segment at 186 to 206 (GELPLSYPTLLAVLCGPICLA) threads the bilayer. Over 207–237 (KQIINVVQLVNAANALVKMDVEQRRAAKKLQ) the chain is Cytoplasmic.

This sequence belongs to the CDP-alcohol phosphatidyltransferase class-I family. Mn(2+) serves as cofactor. The cofactor is Mg(2+).

The protein localises to the microsome membrane. It is found in the endoplasmic reticulum membrane. It localises to the golgi apparatus membrane. Its subcellular location is the mitochondrion outer membrane. The catalysed reaction is a CDP-1,2-diacyl-sn-glycerol + myo-inositol = a 1,2-diacyl-sn-glycero-3-phospho-(1D-myo-inositol) + CMP + H(+). In terms of biological role, catalyzes the synthesis of phosphatidylinositol (PtdIns). This is CDP-diacylglycerol--inositol 3-phosphatidyltransferase (pis1) from Schizosaccharomyces pombe (strain 972 / ATCC 24843) (Fission yeast).